Here is a 457-residue protein sequence, read N- to C-terminus: Siroheme synthase (457 aa).

The precorrin-2 dehydrogenase /sirohydrochlorin ferrochelatase stretch occupies residues 1–204 (MDHLPIFCQL…NDQKAITETT (204 aa)). NAD(+)-binding positions include 22 to 23 (DV) and 43 to 44 (LA). Residue Ser128 is modified to Phosphoserine. Positions 216-457 (GEVVLVGAGP…RDKLNWFSNH (242 aa)) are uroporphyrinogen-III C-methyltransferase. Pro225 lines the S-adenosyl-L-methionine pocket. The Proton acceptor role is filled by Asp248. Lys270 serves as the catalytic Proton donor. S-adenosyl-L-methionine-binding positions include 301 to 303 (GGD), Ile306, 331 to 332 (TA), Met382, and Gly411.

It in the N-terminal section; belongs to the precorrin-2 dehydrogenase / sirohydrochlorin ferrochelatase family. In the C-terminal section; belongs to the precorrin methyltransferase family.

The catalysed reaction is uroporphyrinogen III + 2 S-adenosyl-L-methionine = precorrin-2 + 2 S-adenosyl-L-homocysteine + H(+). It catalyses the reaction precorrin-2 + NAD(+) = sirohydrochlorin + NADH + 2 H(+). The enzyme catalyses siroheme + 2 H(+) = sirohydrochlorin + Fe(2+). The protein operates within cofactor biosynthesis; adenosylcobalamin biosynthesis; precorrin-2 from uroporphyrinogen III: step 1/1. It participates in cofactor biosynthesis; adenosylcobalamin biosynthesis; sirohydrochlorin from precorrin-2: step 1/1. It functions in the pathway porphyrin-containing compound metabolism; siroheme biosynthesis; precorrin-2 from uroporphyrinogen III: step 1/1. Its pathway is porphyrin-containing compound metabolism; siroheme biosynthesis; siroheme from sirohydrochlorin: step 1/1. The protein operates within porphyrin-containing compound metabolism; siroheme biosynthesis; sirohydrochlorin from precorrin-2: step 1/1. Multifunctional enzyme that catalyzes the SAM-dependent methylations of uroporphyrinogen III at position C-2 and C-7 to form precorrin-2 via precorrin-1. Then it catalyzes the NAD-dependent ring dehydrogenation of precorrin-2 to yield sirohydrochlorin. Finally, it catalyzes the ferrochelation of sirohydrochlorin to yield siroheme. The protein is Siroheme synthase of Escherichia coli (strain 55989 / EAEC).